Reading from the N-terminus, the 51-residue chain is UPF0337 protein NE0131 (51 aa).

Belongs to the UPF0337 (CsbD) family.

This is UPF0337 protein NE0131 from Nitrosomonas europaea (strain ATCC 19718 / CIP 103999 / KCTC 2705 / NBRC 14298).